We begin with the raw amino-acid sequence, 291 residues long: ATP synthase gamma chain (291 aa).

The protein belongs to the ATPase gamma chain family. As to quaternary structure, F-type ATPases have 2 components, CF(1) - the catalytic core - and CF(0) - the membrane proton channel. CF(1) has five subunits: alpha(3), beta(3), gamma(1), delta(1), epsilon(1). CF(0) has three main subunits: a, b and c.

The protein resides in the cell inner membrane. Its function is as follows. Produces ATP from ADP in the presence of a proton gradient across the membrane. The gamma chain is believed to be important in regulating ATPase activity and the flow of protons through the CF(0) complex. This is ATP synthase gamma chain from Neisseria meningitidis serogroup C / serotype 2a (strain ATCC 700532 / DSM 15464 / FAM18).